The chain runs to 480 residues: uncharacterized protein (480 aa).

The segment at 1–20 is disordered; it reads MDVKDTGINRSDTPISDQDH.

This is an uncharacterized protein from Arabidopsis thaliana (Mouse-ear cress).